Here is a 413-residue protein sequence, read N- to C-terminus: 1-deoxy-D-xylulose 5-phosphate reductoisomerase (413 aa).

NADPH contacts are provided by Thr-21, Gly-22, Ser-23, Ile-24, Gly-47, and Asn-127. Residue Lys-128 participates in 1-deoxy-D-xylulose 5-phosphate binding. Position 129 (Glu-129) interacts with NADPH. Asp-151 serves as a coordination point for Mn(2+). 1-deoxy-D-xylulose 5-phosphate is bound by residues Ser-152, Glu-153, Ser-177, and His-200. Residue Glu-153 coordinates Mn(2+). Gly-206 contacts NADPH. Residues Ser-213, Asn-218, Lys-219, and Glu-222 each contribute to the 1-deoxy-D-xylulose 5-phosphate site. Glu-222 provides a ligand contact to Mn(2+).

This sequence belongs to the DXR family. Mg(2+) is required as a cofactor. The cofactor is Mn(2+).

It carries out the reaction 2-C-methyl-D-erythritol 4-phosphate + NADP(+) = 1-deoxy-D-xylulose 5-phosphate + NADPH + H(+). The protein operates within isoprenoid biosynthesis; isopentenyl diphosphate biosynthesis via DXP pathway; isopentenyl diphosphate from 1-deoxy-D-xylulose 5-phosphate: step 1/6. Catalyzes the NADPH-dependent rearrangement and reduction of 1-deoxy-D-xylulose-5-phosphate (DXP) to 2-C-methyl-D-erythritol 4-phosphate (MEP). This is 1-deoxy-D-xylulose 5-phosphate reductoisomerase from Mycobacterium bovis (strain ATCC BAA-935 / AF2122/97).